We begin with the raw amino-acid sequence, 90 residues long: Large ribosomal subunit protein bL31 (90 aa).

The segment at 71–90 (KVKKFPSNADNQKEPAEEQE) is disordered. Residues 81–90 (NQKEPAEEQE) are compositionally biased toward basic and acidic residues.

Belongs to the bacterial ribosomal protein bL31 family. Type A subfamily. In terms of assembly, part of the 50S ribosomal subunit.

Functionally, binds the 23S rRNA. The chain is Large ribosomal subunit protein bL31 (rpmE) from Aster yellows witches'-broom phytoplasma (strain AYWB).